The sequence spans 365 residues: Succinate--CoA ligase [ADP-forming] subunit beta (365 aa).

Residues 9–230 form the ATP-grasp domain; the sequence is KEIFRAEGIS…EMEEYEPEEF (222 aa). Residues K45, 52–54, E90, I93, and E98 each bind ATP; that span reads GRG. Residues N190 and D203 each contribute to the Mg(2+) site. Substrate-binding positions include N244 and 300-302; that span reads GIT.

The protein belongs to the succinate/malate CoA ligase beta subunit family. In terms of assembly, heterotetramer of two alpha and two beta subunits. It depends on Mg(2+) as a cofactor.

It catalyses the reaction succinate + ATP + CoA = succinyl-CoA + ADP + phosphate. It carries out the reaction GTP + succinate + CoA = succinyl-CoA + GDP + phosphate. The protein operates within carbohydrate metabolism; tricarboxylic acid cycle; succinate from succinyl-CoA (ligase route): step 1/1. Succinyl-CoA synthetase functions in the citric acid cycle (TCA), coupling the hydrolysis of succinyl-CoA to the synthesis of either ATP or GTP and thus represents the only step of substrate-level phosphorylation in the TCA. The beta subunit provides nucleotide specificity of the enzyme and binds the substrate succinate, while the binding sites for coenzyme A and phosphate are found in the alpha subunit. The protein is Succinate--CoA ligase [ADP-forming] subunit beta of Methanothermobacter thermautotrophicus (strain ATCC 29096 / DSM 1053 / JCM 10044 / NBRC 100330 / Delta H) (Methanobacterium thermoautotrophicum).